Reading from the N-terminus, the 462-residue chain is L-seryl-tRNA(Sec) selenium transferase (462 aa).

Residue lysine 294 is modified to N6-(pyridoxal phosphate)lysine.

Belongs to the SelA family. As to quaternary structure, homodecamer; pentamer of dimers. Binds only one seryl-tRNA(Sec) per dimer. It depends on pyridoxal 5'-phosphate as a cofactor.

The protein resides in the cytoplasm. The catalysed reaction is L-seryl-tRNA(Sec) + selenophosphate + H(+) = L-selenocysteinyl-tRNA(Sec) + phosphate. It participates in aminoacyl-tRNA biosynthesis; selenocysteinyl-tRNA(Sec) biosynthesis; selenocysteinyl-tRNA(Sec) from L-seryl-tRNA(Sec) (bacterial route): step 1/1. Functionally, converts seryl-tRNA(Sec) to selenocysteinyl-tRNA(Sec) required for selenoprotein biosynthesis. This is L-seryl-tRNA(Sec) selenium transferase from Yersinia enterocolitica serotype O:8 / biotype 1B (strain NCTC 13174 / 8081).